Here is a 467-residue protein sequence, read N- to C-terminus: Argininosuccinate lyase (467 aa).

The protein belongs to the lyase 1 family. Argininosuccinate lyase subfamily.

Its subcellular location is the cytoplasm. It carries out the reaction 2-(N(omega)-L-arginino)succinate = fumarate + L-arginine. Its pathway is amino-acid biosynthesis; L-arginine biosynthesis; L-arginine from L-ornithine and carbamoyl phosphate: step 3/3. This Rhizobium etli (strain CIAT 652) protein is Argininosuccinate lyase.